A 342-amino-acid chain; its full sequence is Delta-aminolevulinic acid dehydratase (342 aa).

3 residues coordinate Zn(2+): cysteine 133, cysteine 135, and cysteine 143. The Schiff-base intermediate with substrate role is filled by lysine 210. Positions 220 and 232 each coordinate 5-aminolevulinate. Serine 254 carries the post-translational modification Phosphoserine. Lysine 263 (schiff-base intermediate with substrate) is an active-site residue. Serine 290 and tyrosine 329 together coordinate 5-aminolevulinate.

It belongs to the ALAD family. As to quaternary structure, homooctamer. Requires Zn(2+) as cofactor.

It catalyses the reaction 2 5-aminolevulinate = porphobilinogen + 2 H2O + H(+). The protein operates within porphyrin-containing compound metabolism; protoporphyrin-IX biosynthesis; coproporphyrinogen-III from 5-aminolevulinate: step 1/4. With respect to regulation, inhibited by divalent lead ions. In terms of biological role, catalyzes an early step in the biosynthesis of tetrapyrroles. Binds two molecules of 5-aminolevulinate per subunit, each at a distinct site, and catalyzes their condensation to form porphobilinogen. In Saccharomyces cerevisiae (strain ATCC 204508 / S288c) (Baker's yeast), this protein is Delta-aminolevulinic acid dehydratase (HEM2).